The sequence spans 442 residues: UDP-glycosyltransferase 79B7 (442 aa).

Residues Ser-260, 319–321 (VQQ), 336–344 (HCGPGTIWE), and 358–361 (LSDQ) contribute to the UDP-alpha-D-glucose site.

The protein belongs to the UDP-glycosyltransferase family.

This chain is UDP-glycosyltransferase 79B7 (UGT79B7), found in Arabidopsis thaliana (Mouse-ear cress).